Consider the following 595-residue polypeptide: DNA mismatch repair protein MutL (595 aa).

Belongs to the DNA mismatch repair MutL/HexB family.

Functionally, this protein is involved in the repair of mismatches in DNA. It is required for dam-dependent methyl-directed DNA mismatch repair. May act as a 'molecular matchmaker', a protein that promotes the formation of a stable complex between two or more DNA-binding proteins in an ATP-dependent manner without itself being part of a final effector complex. This Rhodopseudomonas palustris (strain ATCC BAA-98 / CGA009) protein is DNA mismatch repair protein MutL.